Here is an 84-residue protein sequence, read N- to C-terminus: Conophysin-R (84 aa).

Cystine bridges form between cysteine 6-cysteine 46, cysteine 9-cysteine 20, cysteine 14-cysteine 36, cysteine 21-cysteine 26, cysteine 53-cysteine 71, cysteine 65-cysteine 83, and cysteine 72-cysteine 77.

As to expression, expressed by the venom duct.

It is found in the secreted. Targets vasopressin-oxytocin related receptors. No effect observed when injected into goldfish or into mice. This Conus radiatus (Rayed cone) protein is Conophysin-R.